The chain runs to 33 residues: Mu-theraphotoxin-Tp1a (33 aa).

3 disulfides stabilise this stretch: Cys-2-Cys-17, Cys-9-Cys-22, and Cys-16-Cys-29. Residue Ile-33 is modified to Isoleucine amide.

It belongs to the neurotoxin 10 (Hwtx-1) family. 55 (ProTx-III) subfamily. Expressed by the venom gland.

The protein resides in the secreted. Its function is as follows. Inhibits voltage-gated sodium channels without significantly altering the voltage dependence of activation or inactivation. Preferentially inhibits human Nav1.7/SCN9A (IC(50)=2.1 nM) &gt; human Nav1.6/SCN8A &gt; human Nav1.2/SCN2A &gt; human Nav1.1/SCN1A &gt; human Nav1.3/SCN3A channels. Exhibits analgesic properties by reversing spontaneous pain induced in mice by intraplantar injection with OD1 (AC P84646), a scorpion toxin that potentiates human Nav1.7/SCN9A. In Thrixopelma pruriens (Peruvian green velvet tarantula), this protein is Mu-theraphotoxin-Tp1a.